Here is a 179-residue protein sequence, read N- to C-terminus: Guanosine-3',5'-bis(diphosphate) 3'-pyrophosphohydrolase MESH1 (179 aa).

At glycine 2 the chain carries N-acetylglycine. Residue lysine 25 is modified to N6-acetyllysine. An HD domain is found at 32–127 (YINHPIGVAR…VKLADKLYNL (96 aa)). Mn(2+)-binding residues include histidine 35, histidine 61, and aspartate 62. Active-site nucleophile residues include glutamate 65 and aspartate 66. The residue at position 97 (lysine 97) is an N6-acetyllysine. A Mn(2+)-binding site is contributed by aspartate 122. At lysine 123 the chain carries N6-acetyllysine.

This sequence belongs to the MESH1 family. Mn(2+) is required as a cofactor.

The enzyme catalyses guanosine 3',5'-bis(diphosphate) + H2O = GDP + diphosphate + H(+). PpGpp hydrolyzing enzyme involved in starvation response. This is Guanosine-3',5'-bis(diphosphate) 3'-pyrophosphohydrolase MESH1 (Hddc3) from Mus musculus (Mouse).